We begin with the raw amino-acid sequence, 432 residues long: MDHSMSKKLHDEALLHIVGGVNSPSRSNKGVGGGIPVTMERANGAYFYDVDGNKYIDYLAAFGPIITGHAHPHITEAITKAAQNGVLYGTPTKHEITFAKMLKEAIPSLEKVRFTNSGTEAVMTTIRVARAYTGRDKIIKFAGCYHGHFDLVLVEAGSGPSTLGIPDSAGVTKSTAEEVITVPFNDLASFKEALATWGNQVAAVLVEPIVGNFGMVEPAEGFLEAINELAHENGSLVIYDEVITAFRFMYGGAQNYLGVIPDLTAMGKIIGGGLPIGAYGGRIDIMEKVAPLGPAYQAGTHAGNPASILSGIACLEVLQEEGLYDRFQKYGSMLKDGIEKAAVKHGIAVTVNQIVGALTVYFTDEPVTNYAEAGATNGDLFGRFFKGMLEEGINLAPSKYEAWFITSAHSEADILETIQAVDTVFAKMVQDK.

Lys268 is subject to N6-(pyridoxal phosphate)lysine.

Belongs to the class-III pyridoxal-phosphate-dependent aminotransferase family. HemL subfamily. In terms of assembly, homodimer. The cofactor is pyridoxal 5'-phosphate.

The protein localises to the cytoplasm. It catalyses the reaction (S)-4-amino-5-oxopentanoate = 5-aminolevulinate. Its pathway is porphyrin-containing compound metabolism; protoporphyrin-IX biosynthesis; 5-aminolevulinate from L-glutamyl-tRNA(Glu): step 2/2. The polypeptide is Glutamate-1-semialdehyde 2,1-aminomutase 2 (Listeria welshimeri serovar 6b (strain ATCC 35897 / DSM 20650 / CCUG 15529 / CIP 8149 / NCTC 11857 / SLCC 5334 / V8)).